Reading from the N-terminus, the 338-residue chain is Phenylalanine--tRNA ligase alpha subunit (338 aa).

Position 259 (E259) interacts with Mg(2+).

Belongs to the class-II aminoacyl-tRNA synthetase family. Phe-tRNA synthetase alpha subunit type 1 subfamily. Tetramer of two alpha and two beta subunits. Mg(2+) serves as cofactor.

It is found in the cytoplasm. The catalysed reaction is tRNA(Phe) + L-phenylalanine + ATP = L-phenylalanyl-tRNA(Phe) + AMP + diphosphate + H(+). The polypeptide is Phenylalanine--tRNA ligase alpha subunit (Janthinobacterium sp. (strain Marseille) (Minibacterium massiliensis)).